Here is a 258-residue protein sequence, read N- to C-terminus: MLPGFGATQTVSPFPNPPEYASAYTSDRIDNGSAPPPPHPLTEFKVFGEEYRLEEDVIAPLSTAGVEQYYVDKNNWKAEMKKLNRXIGAFFDLLEVLIRAPDHPARDKKMVDLHTIFINMHHLINEFRPVQARDSVRILQERQIDELTEICDDFREYLAHGREVVEDQFKMITGKLPPPPPPSDLTRVRMQNGALHRLIEVEKETEEDEEMKEDDEEKPSTSSSEGNQKTLRDMTKGHGPPSVVNLLARQLNEMELKK.

Disordered regions lie at residues 1–39 (MLPG…PPPH) and 202–243 (EKET…PPSV). A compositionally biased stretch (acidic residues) spans 203 to 217 (KETEEDEEMKEDDEE). Residues 220–229 (STSSSEGNQK) are compositionally biased toward polar residues.

Belongs to the Mediator complex subunit 7 family. As to quaternary structure, component of the Mediator complex.

It localises to the nucleus. Component of the Mediator complex, a coactivator involved in the regulated transcription of nearly all RNA polymerase II-dependent genes. Mediator functions as a bridge to convey information from gene-specific regulatory proteins to the basal RNA polymerase II transcription machinery. Mediator is recruited to promoters by direct interactions with regulatory proteins and serves as a scaffold for the assembly of a functional preinitiation complex with RNA polymerase II and the general transcription factors. The sequence is that of Mediator of RNA polymerase II transcription subunit 7 (let-49) from Caenorhabditis briggsae.